The following is a 249-amino-acid chain: ATP synthase subunit a, chloroplastic (249 aa).

The next 5 helical transmembrane spans lie at 40-60, 97-117, 136-156, 201-221, and 222-242; these read QVLI…VIAI, VPFI…GALL, INTT…AGLS, LVVV…VMFL, and GLFT…AYIG.

It belongs to the ATPase A chain family. As to quaternary structure, F-type ATPases have 2 components, CF(1) - the catalytic core - and CF(0) - the membrane proton channel. CF(1) has five subunits: alpha(3), beta(3), gamma(1), delta(1), epsilon(1). CF(0) has four main subunits: a, b, b' and c.

It is found in the plastid. It localises to the chloroplast thylakoid membrane. Functionally, key component of the proton channel; it plays a direct role in the translocation of protons across the membrane. In Barbarea verna (Land cress), this protein is ATP synthase subunit a, chloroplastic.